The chain runs to 160 residues: Probable cyclic pyranopterin monophosphate synthase (160 aa).

Basic and acidic residues predominate over residues 1–12 (MSDDSELTHVTD). A disordered region spans residues 1–24 (MSDDSELTHVTDDGDAQMVDVGEK). Residues 78–80 (MCH) and 114–115 (ME) contribute to the substrate site. The active site involves Asp129.

The protein belongs to the MoaC family. Homohexamer; trimer of dimers.

It catalyses the reaction (8S)-3',8-cyclo-7,8-dihydroguanosine 5'-triphosphate = cyclic pyranopterin phosphate + diphosphate. Its pathway is cofactor biosynthesis; molybdopterin biosynthesis. Functionally, catalyzes the conversion of (8S)-3',8-cyclo-7,8-dihydroguanosine 5'-triphosphate to cyclic pyranopterin monophosphate (cPMP). The polypeptide is Probable cyclic pyranopterin monophosphate synthase (Natronomonas pharaonis (strain ATCC 35678 / DSM 2160 / CIP 103997 / JCM 8858 / NBRC 14720 / NCIMB 2260 / Gabara) (Halobacterium pharaonis)).